The sequence spans 68 residues: DNA-directed RNA polymerase subunit omega (68 aa).

The protein belongs to the RNA polymerase subunit omega family. In terms of assembly, the RNAP catalytic core consists of 2 alpha, 1 beta, 1 beta' and 1 omega subunit. When a sigma factor is associated with the core the holoenzyme is formed, which can initiate transcription.

It carries out the reaction RNA(n) + a ribonucleoside 5'-triphosphate = RNA(n+1) + diphosphate. Promotes RNA polymerase assembly. Latches the N- and C-terminal regions of the beta' subunit thereby facilitating its interaction with the beta and alpha subunits. The polypeptide is DNA-directed RNA polymerase subunit omega (Geobacter sp. (strain M21)).